The chain runs to 1141 residues: DNA polymerase 120R (1141 aa).

The protein belongs to the DNA polymerase type-B family.

The enzyme catalyses DNA(n) + a 2'-deoxyribonucleoside 5'-triphosphate = DNA(n+1) + diphosphate. In terms of biological role, DNA-directed DNA polymerase involved in viral DNA replication. This Invertebrate iridescent virus 3 (IIV-3) protein is DNA polymerase 120R.